The sequence spans 201 residues: Large ribosomal subunit protein uL4 (201 aa).

The segment at 46–71 is disordered; the sequence is QKTRAEITGTGKKPWRQKGTGRARAG.

It belongs to the universal ribosomal protein uL4 family. As to quaternary structure, part of the 50S ribosomal subunit.

Its function is as follows. One of the primary rRNA binding proteins, this protein initially binds near the 5'-end of the 23S rRNA. It is important during the early stages of 50S assembly. It makes multiple contacts with different domains of the 23S rRNA in the assembled 50S subunit and ribosome. Functionally, forms part of the polypeptide exit tunnel. The sequence is that of Large ribosomal subunit protein uL4 from Shewanella amazonensis (strain ATCC BAA-1098 / SB2B).